Reading from the N-terminus, the 95-residue chain is MRTLALLAAILLVALQAQAEHVSVSIDEVVDQQPPQAEDQDVAIYVKEHESSALEALGVKAGVVCACRRALCLPRERRAGFCRIRGRIHPLCCRR.

An N-terminal signal peptide occupies residues 1 to 19 (MRTLALLAAILLVALQAQA). A propeptide spanning residues 20-62 (EHVSVSIDEVVDQQPPQAEDQDVAIYVKEHESSALEALGVKAG) is cleaved from the precursor. Disulfide bonds link C65–C93, C67–C82, and C72–C92.

Belongs to the alpha-defensin family.

The protein resides in the secreted. This peptide has antibiotic, anti-fungi and antiviral activity. It also inhibits corticotropin (ACTH) stimulated corticosterone production. The polypeptide is Corticostatin-3 (Oryctolagus cuniculus (Rabbit)).